The primary structure comprises 284 residues: 2-dehydro-3-deoxyphosphooctonate aldolase (284 aa).

This sequence belongs to the KdsA family.

It is found in the cytoplasm. The catalysed reaction is D-arabinose 5-phosphate + phosphoenolpyruvate + H2O = 3-deoxy-alpha-D-manno-2-octulosonate-8-phosphate + phosphate. Its pathway is carbohydrate biosynthesis; 3-deoxy-D-manno-octulosonate biosynthesis; 3-deoxy-D-manno-octulosonate from D-ribulose 5-phosphate: step 2/3. The protein operates within bacterial outer membrane biogenesis; lipopolysaccharide biosynthesis. This chain is 2-dehydro-3-deoxyphosphooctonate aldolase, found in Yersinia enterocolitica serotype O:8 / biotype 1B (strain NCTC 13174 / 8081).